Consider the following 517-residue polypeptide: Cytochrome P450 monooxygenase bsc11 (517 aa).

A helical membrane pass occupies residues 16–33 (ALPLTCTGLIIIFAFYLS). The N-linked (GlcNAc...) asparagine glycan is linked to asparagine 204. Residue cysteine 448 coordinates heme.

This sequence belongs to the cytochrome P450 family. Heme is required as a cofactor.

It is found in the membrane. Its pathway is mycotoxin biosynthesis. Functionally, cytochrome P450 monooxygenase; part of the gene cluster that mediates the biosynthesis of the diterpene glucoside brassicicene C. In the first step of the brassicicene C biosynthesis, the bifunctional diterpene synthase bsc8 that possesses both prenyl transferase and terpene cyclase activity, converts isopentenyl diphosphate and dimethylallyl diphosphate into geranylgeranyl diphosphate (GGDP) that is further converted into fusicocca-2,10(14)-diene, the first precursor for brassicicene C. Fusicocca-2,10(14)-diene is then substrate of cytochrome P450 monooxygenase bsc1 for hydroxylation at the C-8 position. Oxidation at C-16 position to aldehyde is then catalyzed by the cytochrome P450 monooyxygenase bsc7, yielding fusicocca-2,10(14)-diene-8-beta,16-diol. Follows the isomerization of the double bond and reduction of aldehyde to alcohol catalyzed by the short-chain dehydrogenase/reductase bsc3 to yield the diol compound fusicocca-1,10(14)-diene-8 beta,16-diol. The next step is the oxidation at the C-3 position of fusicocca-2,10(14)-diene-8-beta,16-diol catalyzed by the alpha-ketoglutarate dependent dioxygenase bsc9, to produce a triol compound. Methylation of the hydroxy group at position 16 is performed by the methyltransferase bsc6. 16-O-methylation is followed by oxidation at the C-13 position to ketone and an alkyl shift of the methyl group leads to brassicicene C. Although the probable acetyltransferase bsc4 is included in the gene cluster, no acetylation reactions are necessary for brassicicene C biosynthesis. However, the fact that brassicicene E, which is a structurally related compound having an acetoxy group at position 12, was previously isolated from another strain of A.brassicicola suggests that the ATCC 96836 strain might also produce a small amount of brassicicene E. The chain is Cytochrome P450 monooxygenase bsc11 from Alternaria brassicicola (Dark leaf spot agent).